A 150-amino-acid polypeptide reads, in one-letter code: D-aminoacyl-tRNA deacylase (150 aa).

The short motif at 138–139 (GP) is the Gly-cisPro motif, important for rejection of L-amino acids element.

This sequence belongs to the DTD family. As to quaternary structure, homodimer.

Its subcellular location is the cytoplasm. It catalyses the reaction glycyl-tRNA(Ala) + H2O = tRNA(Ala) + glycine + H(+). The enzyme catalyses a D-aminoacyl-tRNA + H2O = a tRNA + a D-alpha-amino acid + H(+). In terms of biological role, an aminoacyl-tRNA editing enzyme that deacylates mischarged D-aminoacyl-tRNAs. Also deacylates mischarged glycyl-tRNA(Ala), protecting cells against glycine mischarging by AlaRS. Acts via tRNA-based rather than protein-based catalysis; rejects L-amino acids rather than detecting D-amino acids in the active site. By recycling D-aminoacyl-tRNA to D-amino acids and free tRNA molecules, this enzyme counteracts the toxicity associated with the formation of D-aminoacyl-tRNA entities in vivo and helps enforce protein L-homochirality. This is D-aminoacyl-tRNA deacylase from Chromobacterium violaceum (strain ATCC 12472 / DSM 30191 / JCM 1249 / CCUG 213 / NBRC 12614 / NCIMB 9131 / NCTC 9757 / MK).